The chain runs to 427 residues: 3-phosphoshikimate 1-carboxyvinyltransferase (427 aa).

3-phosphoshikimate is bound by residues K20, S21, and R25. Residue K20 coordinates phosphoenolpyruvate. Positions 92 and 120 each coordinate phosphoenolpyruvate. Residues S165, Q167, D313, and K340 each coordinate 3-phosphoshikimate. Residue Q167 coordinates phosphoenolpyruvate. The active-site Proton acceptor is D313. Positions 344 and 388 each coordinate phosphoenolpyruvate.

This sequence belongs to the EPSP synthase family. As to quaternary structure, monomer.

The protein resides in the cytoplasm. It catalyses the reaction 3-phosphoshikimate + phosphoenolpyruvate = 5-O-(1-carboxyvinyl)-3-phosphoshikimate + phosphate. Its pathway is metabolic intermediate biosynthesis; chorismate biosynthesis; chorismate from D-erythrose 4-phosphate and phosphoenolpyruvate: step 6/7. Functionally, catalyzes the transfer of the enolpyruvyl moiety of phosphoenolpyruvate (PEP) to the 5-hydroxyl of shikimate-3-phosphate (S3P) to produce enolpyruvyl shikimate-3-phosphate and inorganic phosphate. The protein is 3-phosphoshikimate 1-carboxyvinyltransferase of Geobacillus kaustophilus (strain HTA426).